The chain runs to 486 residues: Betaine aldehyde dehydrogenase (486 aa).

The K(+) site is built by Thr23 and Asp90. 147–149 (GAW) contacts NAD(+). Lys159 functions as the Charge relay system in the catalytic mechanism. NAD(+) is bound by residues 173–176 (KPSE) and 226–229 (ESGT). K(+) is bound at residue Leu241. Glu247 serves as the catalytic Proton acceptor. NAD(+)-binding residues include Gly249, Cys281, and Glu382. The active-site Nucleophile is the Cys281. A Cysteine sulfenic acid (-SOH) modification is found at Cys281. Residues Lys452 and Gly455 each coordinate K(+). The active-site Charge relay system is the Glu459.

This sequence belongs to the aldehyde dehydrogenase family. In terms of assembly, dimer of dimers. Requires K(+) as cofactor.

It catalyses the reaction betaine aldehyde + NAD(+) + H2O = glycine betaine + NADH + 2 H(+). Its pathway is amine and polyamine biosynthesis; betaine biosynthesis via choline pathway; betaine from betaine aldehyde: step 1/1. Functionally, involved in the biosynthesis of the osmoprotectant glycine betaine. Catalyzes the irreversible oxidation of betaine aldehyde to the corresponding acid. The sequence is that of Betaine aldehyde dehydrogenase from Vibrio vulnificus (strain CMCP6).